Reading from the N-terminus, the 721-residue chain is Polyribonucleotide nucleotidyltransferase (721 aa).

Residues D495 and D501 each coordinate Mg(2+). The KH domain occupies P562–I621. One can recognise an S1 motif domain in the interval G631–R699. The interval G700–S721 is disordered.

Belongs to the polyribonucleotide nucleotidyltransferase family. Requires Mg(2+) as cofactor.

The protein resides in the cytoplasm. It catalyses the reaction RNA(n+1) + phosphate = RNA(n) + a ribonucleoside 5'-diphosphate. In terms of biological role, involved in mRNA degradation. Catalyzes the phosphorolysis of single-stranded polyribonucleotides processively in the 3'- to 5'-direction. The chain is Polyribonucleotide nucleotidyltransferase from Synechococcus sp. (strain CC9902).